Here is a 482-residue protein sequence, read N- to C-terminus: E1B 55 kDa protein (482 aa).

The disordered stretch occupies residues 73–94 (VLDSGEGPSCADDRDKQEKKES). Residues 83-94 (ADDRDKQEKKES) show a composition bias toward basic and acidic residues. Phosphoserine is present on residues serine 476 and serine 477.

It belongs to the adenoviridae E1B 55 kDa protein family. As to quaternary structure, interacts with host PML-4 and PML-5; this interaction promotes efficient subnuclear targeting of E1B-55K to PML nuclear bodies. Interacts with E4-ORF3 protein. Interacts with E4-ORF6 protein.

Its subcellular location is the host nucleus. It localises to the host cytoplasm. Its function is as follows. Plays a major role to prevent cellular inhibition of viral genome replication. Assembles an SCF-like E3 ubiquitin ligase complex based on the cellular proteins ELOB, ELOC, CUL5 and RBX1, in cooperation with viral E4orf6. This viral RING-type ligase ubiquitinates cellular substrates and targets them to proteasomal degradation: TP53/p53, LIG4, MRE11-RAD50-NBS1 (MRN) complex, ITGA3, DAXX and BLM. E1B-55K probably acts as the substrate-specific adapter of the SCF-like E3 ubiquitin ligase complex. Degradation of host TP53/p53 activity is essential for preventing E1A-induced TP53 accumulation that would otherwise lead to cell apoptosis and growth arrest. E1B-55K also inactivates TP53 transcription-factor activity by binding its transactivation domain. E1B-55K also functions as a SUMO1 E3 ligase for TP53 which causes the latter to be sequestered in promyelocytic leukemia (PML) nuclear bodies thereby contributing to maximal inhibition of TP53 function. This Homo sapiens (Human) protein is E1B 55 kDa protein.